The following is a 1168-amino-acid chain: MTILTTLIKEDNHFQDLNQVFGQANTLVTGLSPSAKVTMIAEKYAQSNQQLLLITNNLYQADKLETDLLQFIDAEELYKYPVQDIMTEEFSTQSPQLMSERIRTLTALAQGKKGLFIVPLNGLKKWLTPVEMWQNHQMTLRVGEDIDVDQFLNKLVNMGYKRESVVSHIGEFSLRGGIIDIFPLIGEPIRIELFDTEIDSIRDFDVETQRSKDNIEEVDITTASDYIITEEVIRHLKEELKTAYENTRPKIDKSVRNDLKETYESFKLFESTYFDHQILRRLVAFMYETPSTIIEYFQKDAIIAVDEFNRIKETEESLTVESDSFISNIIESGNGFIGQSFIKYDDFETLIEGYPVTYFSLFATTMPIKLNHIIKFSCKPVQQFYGQYDIMRSEFQRYVNQNYHIVVLVETETKVERMQAMLSEMHIPSITKLHRSMSSGQAVIIEGSLSEGFELPDMGLVVITERELFKSKQKKQRKRTKAISNAEKIKSYQDLNVGDYIVHVHHGVGRYLGVETLEVGQTHRDYIKLQYKGTDQLFVPVDQMDQVQKYVASEDKTPKLNKLGGSEWKKTKAKVQQSVEDIAEELIDLYKEREMAEGYQYGEDTAEQTTFELDFPYELTPDQAKSIDEIKDDMQKSRPMDRLLCGDVGYGKTEVAVRAAFKAVMEGKQVAFLVPTTILAQQHYETLIERMQDFPVEIQLMSRFRTPKEIKQTKEGLKTGFVDIVVGTHKLLSKDIQYKDLGLLIVDEEQRFGVRHKERIKTLKHNVDVLTLTATPIPRTLHMSMLGVRDLSVIETPPENRFPVQTYVLEQNMSFIKEALERELSRDGQVFYLYNKVQSIYEKREQLQMLMPDANIAVAHGQMTERDLEETMLSFINNEYDILVTTTIIETGVDVPNANTLIIEDADRFGLSQLYQLRGRVGRSSRIGYAYFLHPANKVLTETAEDRLQAIKEFTELGSGFKIAMRDLNIRGAGNLLGKQQHGFIDTVGFDLYSQMLEEAVNEKRGIKEPESEVPEVEVDLNLDAYLPTEYIANEQAKIEIYKKLRKTETFDQIIDIKDELIDRFNDYPVEVARLLDIVEIKVHALHSGITLIKDKGKIIDIHLSVKATENIDGEVLFKATQPLGRTMKVGVQNNAMTITLTKQNQWLDSLKFLVKCIEESMRISDEA.

The Helicase ATP-binding domain maps to 633-794 (DMQKSRPMDR…MLGVRDLSVI (162 aa)). 646–653 (GDVGYGKT) serves as a coordination point for ATP. Residues 747-750 (DEEQ) carry the DEEQ box motif. Residues 808-969 (VLEQNMSFIK…GFKIAMRDLN (162 aa)) form the Helicase C-terminal domain.

It in the N-terminal section; belongs to the UvrB family. The protein in the C-terminal section; belongs to the helicase family. RecG subfamily.

It localises to the cytoplasm. In terms of biological role, couples transcription and DNA repair by recognizing RNA polymerase (RNAP) stalled at DNA lesions. Mediates ATP-dependent release of RNAP and its truncated transcript from the DNA, and recruitment of nucleotide excision repair machinery to the damaged site. This Staphylococcus aureus (strain Mu50 / ATCC 700699) protein is Transcription-repair-coupling factor.